The chain runs to 337 residues: Hsp90 co-chaperone Cdc37-like 1 (337 aa).

Residues 1-11 (MEQPWPPPGPW) show a composition bias toward pro residues. The interval 1–40 (MEQPWPPPGPWSLPRAEGEAEEESDFDVFPSSPRCPQLPG) is disordered. Residues 2-171 (EQPWPPPGPW…YEQKIRHFGM (170 aa)) are self-association. Residues serine 32 and serine 88 each carry the phosphoserine modification. Residues 84–122 (HNSESLDQEHAKAQTAVSELRQREEEWRQKEEALVQREK) are a coiled coil. A self-association and interaction with Hsp90 region spans residues 147 to 277 (KDTEDEDKSE…SRVRLYSQSQ (131 aa)). Residues 267–337 (KSRVRLYSQS…DDEPKMMDTV (71 aa)) form an interaction with Hsp70 region. The tract at residues 278 to 337 (SFQPMTVQNHVPHSGVGSIGLLESLPQNPDYLQYSISTALCSLNSVVHKEDDEPKMMDTV) is required for interaction with STIP1.

This sequence belongs to the CDC37 family. In terms of assembly, self-associates. Forms complexes with Hsp70 and Hsp90. Interacts with CDC37, FKBP4, PPID and STIP1. As to expression, expressed in brain, heart, kidney, liver, placenta and skeletal muscle.

Its subcellular location is the cytoplasm. Co-chaperone that binds to numerous proteins and promotes their interaction with Hsp70 and Hsp90. The protein is Hsp90 co-chaperone Cdc37-like 1 (CDC37L1) of Homo sapiens (Human).